The following is a 109-amino-acid chain: uncharacterized protein (109 aa).

Residues 1 to 28 form the signal peptide; that stretch reads MNMLAYFLYCRQLLLAVVLIEFPPRLCG.

This is an uncharacterized protein from Homo sapiens (Human).